The chain runs to 167 residues: Photosystem I assembly protein Ycf3 (167 aa).

3 TPR repeats span residues 35-68, 72-105, and 120-153; these read AFTY…EIDP, SYIL…NPSL, and GEQA…APNN.

This sequence belongs to the Ycf3 family.

It localises to the plastid. It is found in the chloroplast thylakoid membrane. In terms of biological role, essential for the assembly of the photosystem I (PSI) complex. May act as a chaperone-like factor to guide the assembly of the PSI subunits. This is Photosystem I assembly protein Ycf3 from Zygnema circumcarinatum (Green alga).